The sequence spans 1460 residues: Venom prothrombin activator omicarin-C non-catalytic subunit (1460 aa).

The N-terminal stretch at 1–30 is a signal peptide; it reads MGRYSVSPVPKCLLLMFLGWSGLKYYQVNA. Plastocyanin-like domains follow at residues 32-196, 206-330, 351-529, and 539-685; these read QLRE…LLIC, AQKF…LNIK, MNWE…LLVC, and VQNK…FLDA. 2 F5/8 type A domains span residues 32–330 and 350–685; these read QLRE…LNIK and IMNW…FLDA. Lys-124, Glu-139, Asp-142, and Asp-143 together coordinate Ca(2+). An N-linked (GlcNAc...) asparagine glycan is attached at Asn-156. A disulfide bridge connects residues Cys-170 and Cys-196. Residues Asn-242, Asn-300, Asn-385, Asn-406, and Asn-471 are each glycosylated (N-linked (GlcNAc...) asparagine). An intrachain disulfide couples Cys-251 to Cys-332. The cysteines at positions 503 and 529 are disulfide-linked. Asn-557 carries N-linked (GlcNAc...) asparagine glycosylation. Disulfide bonds link Cys-672-Cys-1031, Cys-965-Cys-991, Cys-1147-Cys-1298, and Cys-1303-Cys-1457. Residues 693–817 form a b region; sequence GNEEEEEDDG…SDDIAGRYLR (125 aa). The tract at residues 740–760 is disordered; sequence LLDDEDNPEQSRSEQTEDDEE. Positions 772-817 are cleaved as a propeptide — activation peptide (connecting region); it reads SFKGSVAEEELKHTALALEEDAHASDPRIDSNSARNSDDIAGRYLR. 2 Plastocyanin-like domains span residues 823–991 and 1000–1143; these read NKRR…ILIC and NRTI…FTVI. The 321-residue stretch at 823-1143 folds into the F5/8 type A 3 domain; it reads NKRRYYIAAE…RGMQALFTVI (321 aa). Ca(2+)-binding residues include Lys-919, Phe-934, Asp-937, and Asp-938. N-linked (GlcNAc...) asparagine glycosylation is present at Asn-943. N-linked (GlcNAc...) asparagine glycosylation is found at Asn-1000, Asn-1180, and Asn-1397. F5/8 type C domains are found at residues 1147–1298 and 1303–1457; these read CKLP…LLGC and CSVP…LFGC.

Belongs to the multicopper oxidase family. Heterodimer of a light and a heavy chains; non-disulfide-linked. The interaction between the two chains is calcium-dependent. Found in its active form associated with omicarin-C catalytic subunit (AC Q58L95). In terms of processing, in physiological conditions, blood coagulation factor V and factor Va are inactivated by activated protein C (APC) through proteolytic degradation of the heavy chain. However, omicarin-C non-catalytic subunit (factor V-like protein) retains its full activity even at high concentration of APC. This has two explanations: this protein has only one of the three cleavage sites present in factor V that are targeted by the APC for inactivation, and the binding with the catalytic subunit protect the cleavage site from inactivation. As to expression, expressed by the venom gland.

It is found in the secreted. In terms of biological role, snake prothrombin activator that attacks the hemostatic system of prey. This non-catalytic subunit is functionally similar to blood coagulation factor V. It serves as a critical cofactor for the prothrombinase activity of the catalytic subunit, which is similar to the blood coagulation factor X. The complex converts prothrombin to thrombin by sequential cleavage at two positions, Arg-320 followed by Arg-271. Cleavage at Arg-320 produces an active intermediate known as meizothrombin. Meizothrombin is the 'second' substrate for prothrombinase, and it docks in an altered manner to present the second cleavage site (271). Cleavage at Arg-271 releases active thrombin from its pro-fragment. This order of events is reversed if the protease component of prothrombinase is used on its own, suggesting that the 271 site is inherently more accessible to proteolysis. The protein is Venom prothrombin activator omicarin-C non-catalytic subunit of Oxyuranus microlepidotus (Inland taipan).